Reading from the N-terminus, the 496-residue chain is Flotillin-like protein 3 (496 aa).

Residue Cys-37 is the site of S-palmitoyl cysteine attachment. A coiled-coil region spans residues 301–328 (VVREAELQLEVERKNALRLTEKLKAEKL).

This sequence belongs to the band 7/mec-2 family. Flotillin subfamily. May be palmitoylated.

The protein resides in the cell membrane. Its subcellular location is the membrane. The protein localises to the caveola. Functionally, may act as a scaffolding protein within caveolar membranes, functionally participating in formation of caveolae or caveolae-like vesicles. The protein is Flotillin-like protein 3 (FLOT3) of Oryza sativa subsp. japonica (Rice).